Consider the following 611-residue polypeptide: DNA mismatch repair protein MutL (611 aa).

This sequence belongs to the DNA mismatch repair MutL/HexB family.

In terms of biological role, this protein is involved in the repair of mismatches in DNA. It is required for dam-dependent methyl-directed DNA mismatch repair. May act as a 'molecular matchmaker', a protein that promotes the formation of a stable complex between two or more DNA-binding proteins in an ATP-dependent manner without itself being part of a final effector complex. The sequence is that of DNA mismatch repair protein MutL from Borrelia garinii subsp. bavariensis (strain ATCC BAA-2496 / DSM 23469 / PBi) (Borreliella bavariensis).